Here is a 118-residue protein sequence, read N- to C-terminus: Large ribosomal subunit protein bL19 (118 aa).

It belongs to the bacterial ribosomal protein bL19 family.

In terms of biological role, this protein is located at the 30S-50S ribosomal subunit interface and may play a role in the structure and function of the aminoacyl-tRNA binding site. The chain is Large ribosomal subunit protein bL19 from Helicobacter pylori (strain P12).